The primary structure comprises 277 residues: Putative pyruvate, phosphate dikinase regulatory protein (277 aa).

151–158 contributes to the ADP binding site; it reads GISRTSKT.

This sequence belongs to the pyruvate, phosphate/water dikinase regulatory protein family. PDRP subfamily.

The enzyme catalyses N(tele)-phospho-L-histidyl/L-threonyl-[pyruvate, phosphate dikinase] + ADP = N(tele)-phospho-L-histidyl/O-phospho-L-threonyl-[pyruvate, phosphate dikinase] + AMP + H(+). It catalyses the reaction N(tele)-phospho-L-histidyl/O-phospho-L-threonyl-[pyruvate, phosphate dikinase] + phosphate + H(+) = N(tele)-phospho-L-histidyl/L-threonyl-[pyruvate, phosphate dikinase] + diphosphate. Bifunctional serine/threonine kinase and phosphorylase involved in the regulation of the pyruvate, phosphate dikinase (PPDK) by catalyzing its phosphorylation/dephosphorylation. The sequence is that of Putative pyruvate, phosphate dikinase regulatory protein from Alkaliphilus metalliredigens (strain QYMF).